The primary structure comprises 115 residues: Potassium-transporting ATPase potassium-binding subunit (115 aa).

A run of 2 helical transmembrane segments spans residues 8 to 28 and 60 to 80; these read YFLL…VAFF and SYCT…YGLL.

This sequence belongs to the KdpA family. The system is composed of three essential subunits: KdpA, KdpB and KdpC.

It is found in the cell membrane. In terms of biological role, part of the high-affinity ATP-driven potassium transport (or Kdp) system, which catalyzes the hydrolysis of ATP coupled with the electrogenic transport of potassium into the cytoplasm. This subunit binds the extracellular potassium ions and delivers the ions to the membrane domain of KdpB through an intramembrane tunnel. The chain is Potassium-transporting ATPase potassium-binding subunit from Geobacillus stearothermophilus (Bacillus stearothermophilus).